The chain runs to 180 residues: Large ribosomal subunit protein uL5 (180 aa).

Belongs to the universal ribosomal protein uL5 family. In terms of assembly, part of the 50S ribosomal subunit; part of the 5S rRNA/L5/L18/L25 subcomplex. Contacts the 5S rRNA and the P site tRNA. Forms a bridge to the 30S subunit in the 70S ribosome.

Its function is as follows. This is one of the proteins that bind and probably mediate the attachment of the 5S RNA into the large ribosomal subunit, where it forms part of the central protuberance. In the 70S ribosome it contacts protein S13 of the 30S subunit (bridge B1b), connecting the 2 subunits; this bridge is implicated in subunit movement. Contacts the P site tRNA; the 5S rRNA and some of its associated proteins might help stabilize positioning of ribosome-bound tRNAs. This Lactobacillus acidophilus (strain ATCC 700396 / NCK56 / N2 / NCFM) protein is Large ribosomal subunit protein uL5.